Consider the following 416-residue polypeptide: Neurotensin receptor type 2 (416 aa).

At Met-1–Lys-32 the chain is on the extracellular side. A helical transmembrane segment spans residues Val-33 to His-55. Residues Val-56–Arg-64 lie on the Cytoplasmic side of the membrane. A helical membrane pass occupies residues Pro-65–Met-87. The Extracellular segment spans residues Pro-88 to Arg-109. Cysteines 108 and 194 form a disulfide. The helical transmembrane segment at Gly-110–Ala-131 threads the bilayer. Residues Glu-132–Arg-154 lie on the Cytoplasmic side of the membrane. The chain crosses the membrane as a helical span at residues Leu-155–Gln-176. Over Lys-177–Ala-216 the chain is Extracellular. A helical membrane pass occupies residues Leu-217 to Tyr-237. Over Ser-238–Gln-297 the chain is Cytoplasmic. Residues Val-298–Leu-318 form a helical membrane-spanning segment. Residues Met-319 to His-337 lie on the Extracellular side of the membrane. The chain crosses the membrane as a helical span at residues Tyr-338–Tyr-358. Residues Asn-359–Val-416 lie on the Cytoplasmic side of the membrane. Residue Cys-377 is the site of S-palmitoyl cysteine attachment. Residue Ser-410 is modified to Phosphoserine.

It belongs to the G-protein coupled receptor 1 family. Neurotensin receptor subfamily. NTSR2 sub-subfamily. As to expression, abundant in cortex and hypothalamus, and lower levels seen in the heart and intestine.

The protein resides in the cell membrane. Receptor for the tridecapeptide neurotensin. It is associated with G proteins that activate a phosphatidylinositol-calcium second messenger system. This Rattus norvegicus (Rat) protein is Neurotensin receptor type 2 (Ntsr2).